We begin with the raw amino-acid sequence, 950 residues long: Protocadherin alpha-6 (950 aa).

The N-terminal stretch at 1-29 (MVFTPEDRLGKQCLLLPLLLLAAWKVGSG) is a signal peptide. At 30–697 (QLHYSVPEEA…GPEAALVDVN (668 aa)) the chain is on the extracellular side. Cadherin domains are found at residues 34–133 (SVPE…PPLF), 157–242 (ASDA…APNF), 243–350 (EQSE…VPEI), 351–455 (ALTS…APAF), 456–565 (AQPE…APAL), and 581–678 (VPRS…APKA). N-linked (GlcNAc...) asparagine glycosylation is found at Asn-257, Asn-265, Asn-386, and Asn-548. A helical membrane pass occupies residues 698 to 718 (VYLIIAICAVSSLLVLTLLLY). The Cytoplasmic segment spans residues 719–950 (TALRCSAPST…GNSTTDNSDQ (232 aa)). PXXP repeat units lie at residues 799–802 (PRQP), 832–835 (PGGP), 873–876 (PGNP), and 891–894 (PGSP). A 4 X 4 AA repeats of P-X-X-P region spans residues 799-894 (PRQPNPDWRY…PDKFIIPGSP (96 aa)). The tract at residues 830 to 889 (AGPGGPDQQWPTVSSATPEPEAGEVSPPVGAGVNSNSWTFKYGPGNPKQSGPGELPDKFI) is disordered. The segment at 901 to 950 (QEPANSQIDKSDFITFGKKEETKKKKKKKKGNKTQEKKEKGNSTTDNSDQ) is disordered. Over residues 909–923 (DKSDFITFGKKEETK) the composition is skewed to basic and acidic residues.

The protein localises to the cell membrane. Its function is as follows. Potential calcium-dependent cell-adhesion protein. May be involved in the establishment and maintenance of specific neuronal connections in the brain. In Pan troglodytes (Chimpanzee), this protein is Protocadherin alpha-6 (PCDHA6).